Consider the following 307-residue polypeptide: Thioredoxin reductase (307 aa).

Position 34–41 (34–41 (ESKAHGGQ)) interacts with FAD. A disulfide bridge connects residues cysteine 134 and cysteine 137. An FAD-binding site is contributed by 275-284 (DVRAKSFRQV).

The protein belongs to the class-II pyridine nucleotide-disulfide oxidoreductase family. In terms of assembly, homodimer. The cofactor is FAD.

The protein resides in the cytoplasm. It catalyses the reaction [thioredoxin]-dithiol + NADP(+) = [thioredoxin]-disulfide + NADPH + H(+). The sequence is that of Thioredoxin reductase (trxB) from Treponema pallidum (strain Nichols).